The chain runs to 394 residues: Elongation factor Tu (394 aa).

The tr-type G domain occupies lysine 10–glutamate 204. Residues glycine 19–threonine 26 are G1. GTP is bound at residue glycine 19–threonine 26. Mg(2+) is bound at residue threonine 26. Residues glycine 60 to asparagine 64 are G2. The interval aspartate 81 to glycine 84 is G3. Residues aspartate 81 to histidine 85 and asparagine 136 to aspartate 139 each bind GTP. Residues asparagine 136–aspartate 139 are G4. The segment at serine 174–leucine 176 is G5.

The protein belongs to the TRAFAC class translation factor GTPase superfamily. Classic translation factor GTPase family. EF-Tu/EF-1A subfamily. Monomer.

It localises to the cytoplasm. The catalysed reaction is GTP + H2O = GDP + phosphate + H(+). Functionally, GTP hydrolase that promotes the GTP-dependent binding of aminoacyl-tRNA to the A-site of ribosomes during protein biosynthesis. The polypeptide is Elongation factor Tu (Shewanella pealeana (strain ATCC 700345 / ANG-SQ1)).